We begin with the raw amino-acid sequence, 336 residues long: MFLTLIAAIISFMVSAFTMPYFIKFYQLKKIGGQQMHEDVKQHLAKAGTPTMGGTVFLLVATAVSLLVSLFSIKNTQSLALISGILSIVVIYGIIGFLDDFLKIFKQINEGLTAKQKLALQLAGGLMFYFLHVSPSGISSINVFGYQLPLGIFYLFFVLFWVVGFSNAVNLTDGIDGLASISVVISLVTYGVIAYVQSQFDVLLLIGAMIGALLGFFCFNHKPAKVFMGDVGSLALGAMLAAISIALRQEWTLLIIGIVYVLETSSVMLQVSYFKYTKKKYGEGRRIFRMTPFHHHLELGGLSGKGKKWSEWQVDAFLWGVGSLASLLVLAILYVF.

10 consecutive transmembrane segments (helical) span residues 3 to 23, 53 to 73, 78 to 98, 118 to 138, 143 to 163, 174 to 194, 200 to 220, 226 to 246, 251 to 271, and 316 to 336; these read LTLI…PYFI, GGTV…LFSI, SLAL…IGFL, LALQ…PSGI, VFGY…FWVV, GIDG…GVIA, FDVL…FCFN, VFMG…ISIA, WTLL…MLQV, and AFLW…LYVF.

It belongs to the glycosyltransferase 4 family. MraY subfamily. Mg(2+) is required as a cofactor.

Its subcellular location is the cell membrane. The catalysed reaction is UDP-N-acetyl-alpha-D-muramoyl-L-alanyl-gamma-D-glutamyl-L-lysyl-D-alanyl-D-alanine + di-trans,octa-cis-undecaprenyl phosphate = Mur2Ac(oyl-L-Ala-gamma-D-Glu-L-Lys-D-Ala-D-Ala)-di-trans,octa-cis-undecaprenyl diphosphate + UMP. It functions in the pathway cell wall biogenesis; peptidoglycan biosynthesis. Its function is as follows. Catalyzes the initial step of the lipid cycle reactions in the biosynthesis of the cell wall peptidoglycan: transfers peptidoglycan precursor phospho-MurNAc-pentapeptide from UDP-MurNAc-pentapeptide onto the lipid carrier undecaprenyl phosphate, yielding undecaprenyl-pyrophosphoryl-MurNAc-pentapeptide, known as lipid I. The sequence is that of Phospho-N-acetylmuramoyl-pentapeptide-transferase from Streptococcus pyogenes serotype M49 (strain NZ131).